Here is a 570-residue protein sequence, read N- to C-terminus: Polypeptide N-acetylgalactosaminyltransferase 2 (570 aa).

Topologically, residues 1–6 are cytoplasmic; the sequence is MRRRSR. Residues 7–24 form a helical; Signal-anchor for type II membrane protein membrane-spanning segment; that stretch reads MLLCFALLWVLGIAYYMY. Residues 25–570 are Lumenal-facing; it reads SGGGSALAAG…QWKFSLNLQQ (546 aa). Residue Ser29 is glycosylated (O-linked (Xyl...) (chondroitin sulfate) serine). 4 disulfides stabilise this stretch: Cys125–Cys353, Cys344–Cys422, Cys455–Cys472, and Cys495–Cys512. The interval 134-239 is catalytic subdomain A; that stretch reads LPATSVVITF…ERWLEPLLER (106 aa). Residues Thr142, Asp175, and Arg200 each contribute to the substrate site. Asp223 lines the Mn(2+) pocket. Ser224 contributes to the substrate binding site. His225 contributes to the Mn(2+) binding site. The tract at residues 299 to 361 is catalytic subdomain B; it reads PIKTPMIAGG…PCSRVGHVFR (63 aa). Substrate is bound at residue Trp330. Mn(2+) is bound at residue His358. Substrate contacts are provided by Arg361, His364, and Tyr366. One can recognise a Ricin B-type lectin domain in the interval 442 to 565; sequence QDIAFGALQQ…PALSQQWKFS (124 aa). N-linked (GlcNAc...) asparagine glycosylation is present at Asn515. A Phosphoserine modification is found at Ser535. An intrachain disulfide couples Cys538 to Cys554.

Belongs to the glycosyltransferase 2 family. GalNAc-T subfamily. It depends on Mn(2+) as a cofactor. As to expression, widely expressed at high level.

The protein resides in the golgi apparatus. It is found in the golgi stack membrane. The protein localises to the secreted. It carries out the reaction L-seryl-[protein] + UDP-N-acetyl-alpha-D-galactosamine = a 3-O-[N-acetyl-alpha-D-galactosaminyl]-L-seryl-[protein] + UDP + H(+). The catalysed reaction is L-threonyl-[protein] + UDP-N-acetyl-alpha-D-galactosamine = a 3-O-[N-acetyl-alpha-D-galactosaminyl]-L-threonyl-[protein] + UDP + H(+). It participates in protein modification; protein glycosylation. Functionally, catalyzes the initial reaction in O-linked oligosaccharide biosynthesis, the transfer of an N-acetyl-D-galactosamine residue to a serine or threonine residue on the protein receptor. Has a broad spectrum of substrates for peptides such as EA2, Muc5AC, Muc1a, Muc1b. Probably involved in O-linked glycosylation of the immunoglobulin A1 (IgA1) hinge region. Involved in O-linked glycosylation of APOC-III, ANGPTL3 and PLTP. It participates in the regulation of HDL-C metabolism. The protein is Polypeptide N-acetylgalactosaminyltransferase 2 (Galnt2) of Mus musculus (Mouse).